The primary structure comprises 62 residues: Conotoxin Qc5.1 (62 aa).

The signal sequence occupies residues 1 to 22; that stretch reads MRCVPVFIILLLLSPSAPSVDA. Residues 23–48 constitute a propeptide that is removed on maturation; the sequence is HPMTKDDVPQASFHDDAKRTLQVPWM. Valine 60 is subject to Valine amide.

This sequence belongs to the conotoxin T superfamily. Post-translationally, contains 2 disulfide bonds that can be either 'C1-C3, C2-C4' or 'C1-C4, C2-C3', since these disulfide connectivities have been observed for conotoxins with cysteine framework V (for examples, see AC P0DQQ7 and AC P81755). Expressed by the venom duct.

It localises to the secreted. The sequence is that of Conotoxin Qc5.1 from Conus quercinus (Oak cone).